The primary structure comprises 464 residues: L-cystine uptake protein TcyP (464 aa).

Helical transmembrane passes span 3–23 (TLLV…LYYM), 34–54 (VFTA…IYEP), 73–93 (YVKL…ISAF), 107–127 (GLII…GIAA), 184–204 (PTST…FIGV), 225–245 (IVMR…LALM), 263–283 (FVLA…LLIA), 347–367 (AGIY…IDPL), 371–391 (FILT…GVGG), and 395–415 (FAAL…ALVI).

This sequence belongs to the dicarboxylate/amino acid:cation symporter (DAACS) (TC 2.A.23) family.

The protein localises to the membrane. In terms of biological role, mediates uptake of L-cystine, the oxidized form of L-cysteine. The chain is L-cystine uptake protein TcyP from Bacillus cereus (strain ATCC 14579 / DSM 31 / CCUG 7414 / JCM 2152 / NBRC 15305 / NCIMB 9373 / NCTC 2599 / NRRL B-3711).